A 624-amino-acid chain; its full sequence is Glutaminase 2 (624 aa).

A disordered region spans residues 1 to 20 (MDTQPIRLPSVAGATRSAGY). The segment at 43–325 (GELADYIPEL…LSARFDLHML (283 aa)) is glutaminase. Substrate contacts are provided by Ser85, Asn134, Glu178, Asn185, Tyr209, Tyr261, and Val279. Positions 355 to 466 (QQILDERHSD…ALLDDAIEWA (112 aa)) constitute an STAS domain. Residue 491 to 608 (LLAELDTDEI…IMRNLAAILA (118 aa)) coordinates a nucleoside 3',5'-cyclic phosphate.

This sequence belongs to the glutaminase family. In terms of assembly, homotetramer.

It catalyses the reaction L-glutamine + H2O = L-glutamate + NH4(+). The protein is Glutaminase 2 (glsA2) of Bradyrhizobium diazoefficiens (strain JCM 10833 / BCRC 13528 / IAM 13628 / NBRC 14792 / USDA 110).